Reading from the N-terminus, the 290-residue chain is GTPase Era (290 aa).

One can recognise an Era-type G domain in the interval 2–169 (KSGFAAILGR…KNKIYENFSE (168 aa)). The G1 stretch occupies residues 10–17 (GRPSTGKS). Position 10–17 (10–17 (GRPSTGKS)) interacts with GTP. The interval 36–40 (QTTRN) is G2. A G3 region spans residues 57 to 60 (DTPG). Residues 57–61 (DTPGF) and 119–122 (NKVD) contribute to the GTP site. Residues 119-122 (NKVD) form a G4 region. Residues 148 to 150 (ISA) form a G5 region. A KH type-2 domain is found at 200-276 (LKEELPYSLY…NLFLQVKLKK (77 aa)).

It belongs to the TRAFAC class TrmE-Era-EngA-EngB-Septin-like GTPase superfamily. Era GTPase family. Monomer.

It is found in the cytoplasm. The protein resides in the cell inner membrane. Its function is as follows. An essential GTPase that binds both GDP and GTP, with rapid nucleotide exchange. Plays a role in 16S rRNA processing and 30S ribosomal subunit biogenesis and possibly also in cell cycle regulation and energy metabolism. This Borreliella afzelii (strain PKo) (Borrelia afzelii) protein is GTPase Era.